Here is a 364-residue protein sequence, read N- to C-terminus: Aminomethyltransferase (364 aa).

This sequence belongs to the GcvT family. As to quaternary structure, the glycine cleavage system is composed of four proteins: P, T, L and H.

The catalysed reaction is N(6)-[(R)-S(8)-aminomethyldihydrolipoyl]-L-lysyl-[protein] + (6S)-5,6,7,8-tetrahydrofolate = N(6)-[(R)-dihydrolipoyl]-L-lysyl-[protein] + (6R)-5,10-methylene-5,6,7,8-tetrahydrofolate + NH4(+). The glycine cleavage system catalyzes the degradation of glycine. The chain is Aminomethyltransferase from Salmonella enteritidis PT4 (strain P125109).